The sequence spans 163 residues: NF-kappa-B inhibitor-interacting Ras-like protein 2 (163 aa).

The small GTPase-like stretch occupies residues 1–163 (MGKSCKVVIC…SANWNLHPDH (163 aa)). Residue 11 to 18 (GQHGVGKT) participates in GTP binding. The short motif at 35 to 43 (MIETQEDIY) is the Effector region element. Residues 61-65 (DTRGL) and 120-123 (NKSD) each bind GTP.

Belongs to the small GTPase superfamily. Ras family. KappaB-Ras subfamily.

Its subcellular location is the cytoplasm. Functionally, atypical Ras-like protein that acts as a potent regulator of NF-kappa-B activity by preventing the degradation of NF-kappa-B inhibitor beta (NFKBIB) by most signals, explaining why NFKBIB is more resistant to degradation. The polypeptide is NF-kappa-B inhibitor-interacting Ras-like protein 2 (nkiras2) (Xenopus laevis (African clawed frog)).